The chain runs to 75 residues: Venom serine protease inhibitor BiVSPI (75 aa).

A signal peptide spans 1 to 20; the sequence is MSRILFVFLAVMAIFSTSFG. Disulfide bonds link C23/C55, C32/C51, C35/C47, C39/C75, and C57/C69. A TIL domain is found at 23 to 75; the sequence is CGLNEEFKSCGSCEPTCAKPRVTICTMECKIGCQCKSGYLRNGEGTCVLPEKC.

This sequence belongs to the serine protease inhibitor-like (TIL domain-containing) family. May be O-glycosylated. Expressed by the venom gland (at protein level) and expressed in fat body.

Its subcellular location is the secreted. The protein resides in the target cell membrane. In terms of biological role, antimicrobial venom serine protease inhibitor. Exhibits inhibitory activity against chymotrypsin (IC(50)=19.56 nM, Ki=15.24 nM) and microbial serine proteases, such as subtilisin A (IC(50)=6.57 nM, Ki=6.83 nM) and proteinase K (IC(50)=7.11 nM, Ki=7.02 nM). Has not activity against trypsin, plasmin, tPA, thrombin, factor Xa or elastase. Binds and inhibits Gram-positive bacteria (B.subtilis (MIC=29.45 uM), B.thuringiensis (MIC=91.03 uM)) and the entomopathogenic fungus B.bassiana (MIC=30.09 uM) but not to E.coli. The protein is Venom serine protease inhibitor BiVSPI of Bombus ignitus (Bumblebee).